Consider the following 1412-residue polypeptide: DNA-directed RNA polymerase subunit beta' (1412 aa).

Residues Cys70, Cys72, Cys85, and Cys88 each contribute to the Zn(2+) site. Mg(2+)-binding residues include Asp460, Asp462, and Asp464. The Zn(2+) site is built by Cys819, Cys893, Cys900, and Cys903. Residues 1393–1412 (EAFEFGTPSAPAEEPQHPAE) form a disordered region.

It belongs to the RNA polymerase beta' chain family. The RNAP catalytic core consists of 2 alpha, 1 beta, 1 beta' and 1 omega subunit. When a sigma factor is associated with the core the holoenzyme is formed, which can initiate transcription. Requires Mg(2+) as cofactor. It depends on Zn(2+) as a cofactor.

It carries out the reaction RNA(n) + a ribonucleoside 5'-triphosphate = RNA(n+1) + diphosphate. DNA-dependent RNA polymerase catalyzes the transcription of DNA into RNA using the four ribonucleoside triphosphates as substrates. The protein is DNA-directed RNA polymerase subunit beta' of Burkholderia pseudomallei (strain 1106a).